A 1526-amino-acid chain; its full sequence is DNA topoisomerase 2-alpha (1526 aa).

Methionine 1 is modified (N-acetylmethionine). The residue at position 4 (serine 4) is a Phosphoserine. Lysine 17 participates in a covalent cross-link: Glycyl lysine isopeptide (Lys-Gly) (interchain with G-Cter in SUMO2). ATP contacts are provided by residues asparagine 90, asparagine 118, and 146-148 (SSN). Glycyl lysine isopeptide (Lys-Gly) (interchain with G-Cter in SUMO2) cross-links involve residues lysine 154 and lysine 155. 159–166 (GRNGYGAK) contributes to the ATP binding site. Threonine 280 carries the post-translational modification Phosphothreonine. Positions 340 to 342 (KKK) are interaction with DNA. A Glycyl lysine isopeptide (Lys-Gly) (interchain with G-Cter in SUMO2) cross-link involves residue lysine 350. 374–376 (QTK) contributes to the ATP binding site. Residues lysine 384, lysine 395, lysine 414, lysine 416, lysine 423, and lysine 438 each participate in a glycyl lysine isopeptide (Lys-Gly) (interchain with G-Cter in SUMO2) cross-link. The Toprim domain maps to 453-570 (CTLILTEGDS…SLLRHRFLEE (118 aa)). Residue glutamate 459 coordinates Mg(2+). Residues lysine 464, lysine 478, and lysine 527 each participate in a glycyl lysine isopeptide (Lys-Gly) (interchain with G-Cter in SUMO2) cross-link. Mg(2+)-binding residues include aspartate 539 and aspartate 541. Glycyl lysine isopeptide (Lys-Gly) (interchain with G-Cter in SUMO2) cross-links involve residues lysine 582, lysine 597, lysine 612, lysine 620, lysine 623, lysine 630, lysine 637, lysine 653, lysine 660, and lysine 674. In terms of domain architecture, Topo IIA-type catalytic spans 713–1168 (IPSMVDGLKP…TPSDLWKEDL (456 aa)). Residue tyrosine 803 is the O-(5'-phospho-DNA)-tyrosine intermediate of the active site. The interval 988-997 (KLQTSLTCNS) is interaction with DNA. A Glycyl lysine isopeptide (Lys-Gly) (interchain with G-Cter in SUMO2) cross-link involves residue lysine 1073. A compositionally biased stretch (basic and acidic residues) spans 1087–1096 (AWKEAQQKVP). A disordered region spans residues 1087–1120 (AWKEAQQKVPEEEENEENEESESESTSPAAESGP). Positions 1097–1109 (EEEENEENEESES) are enriched in acidic residues. Residues lysine 1193 and lysine 1201 each participate in a glycyl lysine isopeptide (Lys-Gly) (interchain with G-Cter in SUMO2) cross-link. Phosphoserine is present on serine 1210. The interval 1229–1526 (EKKIRRKIKS…YLEESDDDLF (298 aa)) is disordered. Lysine 1237 is covalently cross-linked (Glycyl lysine isopeptide (Lys-Gly) (interchain with G-Cter in SUMO1); alternate). Lysine 1237 is covalently cross-linked (Glycyl lysine isopeptide (Lys-Gly) (interchain with G-Cter in SUMO2); alternate). Threonine 1244 bears the Phosphothreonine mark. The segment covering 1254–1268 (LRQRLEKRQKREPGT) has biased composition (basic and acidic residues). Glycyl lysine isopeptide (Lys-Gly) (interchain with G-Cter in SUMO2) cross-links involve residues lysine 1272, lysine 1279, and lysine 1282. 4 positions are modified to phosphoserine: serine 1291, serine 1293, serine 1295, and serine 1298. The residue at position 1323 (threonine 1323) is a Phosphothreonine. Over residues 1326-1346 (LDSDDDFSGLDEKDEDEDFFP) the composition is skewed to acidic residues. Phosphoserine occurs at positions 1328 and 1333. Threonine 1350 bears the Phosphothreonine mark. Glycyl lysine isopeptide (Lys-Gly) (interchain with G-Cter in SUMO2) cross-links involve residues lysine 1359, lysine 1363, and lysine 1369. 2 positions are modified to phosphoserine: serine 1370 and serine 1373. Lysine 1381 participates in a covalent cross-link: Glycyl lysine isopeptide (Lys-Gly) (interchain with G-Cter in SUMO2). Phosphoserine occurs at positions 1383 and 1387. Positions 1417–1427 (TKGQSLTSTAG) are enriched in polar residues. A Glycyl lysine isopeptide (Lys-Gly) (interchain with G-Cter in SUMO2); alternate cross-link involves residue lysine 1418. At lysine 1418 the chain carries N6-acetyllysine; alternate. The interaction with PLSCR1 stretch occupies residues 1429-1435 (KKRAVPK). A Glycyl lysine isopeptide (Lys-Gly) (interchain with G-Cter in SUMO2); alternate cross-link involves residue lysine 1438. An N6-acetyllysine; alternate modification is found at lysine 1438. Glycyl lysine isopeptide (Lys-Gly) (interchain with G-Cter in SUMO2) cross-links involve residues lysine 1450 and lysine 1455. Phosphoserine occurs at positions 1465, 1467, 1470, and 1472. Residues lysine 1480 and lysine 1488 each participate in a glycyl lysine isopeptide (Lys-Gly) (interchain with G-Cter in SUMO2) cross-link. Basic and acidic residues predominate over residues 1487–1498 (LKGEERDFHVDL). Phosphoserine is present on serine 1521.

Belongs to the type II topoisomerase family. Homodimer. Interacts with COPS5. Interacts with RECQL5; this stimulates DNA decatenation. Interacts with SETMAR; stimulates the topoisomerase activity. Interacts with DHX9; this interaction occurs in a E2 enzyme UBE2I- and RNA-dependent manner, negatively regulates DHX9-mediated double-stranded DNA and RNA duplex helicase activity and stimulates TOP2A-mediated supercoiled DNA relaxation activity. Interacts with HNRNPU (via C-terminus); this interaction protects the topoisomerase TOP2A from degradation and positively regulates the relaxation of supercoiled DNA in a RNA-dependent manner. Interacts with MCM3AP. Interacts with ERCC6. Interacts with PLSCR1. Interacts with GCNA; this interaction allows the resolution of topoisomerase II (TOP2A) DNA-protein cross-links. Interacts with POL1RA/RPA1 (via dock II) and UBTF in the context of Pol I complex; may assist Pol I transcription initiation by releasing supercoils occurring during DNA unwinding. Interacts with TPRN; TPRN interacts with a number of DNA damage response proteins, is recruited to sites of DNA damage and may play a role in DNA damage repair. Requires Mg(2+) as cofactor. It depends on Mn(2+) as a cofactor. The cofactor is Ca(2+). In terms of processing, phosphorylation has no effect on catalytic activity.

It is found in the cytoplasm. It localises to the nucleus. The protein localises to the nucleoplasm. Its subcellular location is the nucleolus. The catalysed reaction is ATP-dependent breakage, passage and rejoining of double-stranded DNA.. Its function is as follows. Key decatenating enzyme that alters DNA topology by binding to two double-stranded DNA molecules, generating a double-stranded break in one of the strands, passing the intact strand through the broken strand, and religating the broken strand. May play a role in regulating the period length of BMAL1 transcriptional oscillation. This Rattus norvegicus (Rat) protein is DNA topoisomerase 2-alpha (Top2a).